An 814-amino-acid polypeptide reads, in one-letter code: DNA gyrase subunit A (814 aa).

The Topo IIA-type catalytic domain occupies 32–499 (LPDVRDGLKP…GVIEFREEDL (468 aa)). Tyr-120 serves as the catalytic O-(5'-phospho-DNA)-tyrosine intermediate. A GyrA-box motif is present at residues 526-532 (QHRAGRG).

The protein belongs to the type II topoisomerase GyrA/ParC subunit family. Heterotetramer, composed of two GyrA and two GyrB chains. In the heterotetramer, GyrA contains the active site tyrosine that forms a transient covalent intermediate with DNA, while GyrB binds cofactors and catalyzes ATP hydrolysis.

Its subcellular location is the cytoplasm. The catalysed reaction is ATP-dependent breakage, passage and rejoining of double-stranded DNA.. In terms of biological role, a type II topoisomerase that negatively supercoils closed circular double-stranded (ds) DNA in an ATP-dependent manner to modulate DNA topology and maintain chromosomes in an underwound state. Negative supercoiling favors strand separation, and DNA replication, transcription, recombination and repair, all of which involve strand separation. Also able to catalyze the interconversion of other topological isomers of dsDNA rings, including catenanes and knotted rings. Type II topoisomerases break and join 2 DNA strands simultaneously in an ATP-dependent manner. The polypeptide is DNA gyrase subunit A (Dehalogenimonas lykanthroporepellens (strain ATCC BAA-1523 / JCM 15061 / BL-DC-9)).